The sequence spans 309 residues: Hydroxyacylglutathione hydrolase, mitochondrial (309 aa).

The N-terminal 24 residues, 1–24 (MVLGRGSLCLRSLSALGATCARRG), are a transit peptide targeting the mitochondrion. Residue Lys90 is modified to N6-acetyllysine. Zn(2+) contacts are provided by His103, His105, Asp107, and His108. The residue at position 117 (Lys117) is an N6-acetyllysine. Zn(2+) is bound by residues His159 and Asp183. Substrate contacts are provided by residues 192-194 (KFY) and 222-224 (HEY). His222 is a Zn(2+) binding site. An N6-acetyllysine; alternate modification is found at Lys230. Lys230 carries the post-translational modification N6-succinyllysine; alternate. 298 to 301 (RREK) is a binding site for substrate.

Belongs to the metallo-beta-lactamase superfamily. Glyoxalase II family. Monomer. It depends on Zn(2+) as a cofactor.

Its subcellular location is the mitochondrion matrix. The protein localises to the cytoplasm. The enzyme catalyses an S-(2-hydroxyacyl)glutathione + H2O = a 2-hydroxy carboxylate + glutathione + H(+). The catalysed reaction is (R)-S-lactoylglutathione + H2O = (R)-lactate + glutathione + H(+). It participates in secondary metabolite metabolism; methylglyoxal degradation; (R)-lactate from methylglyoxal: step 2/2. Its function is as follows. Thiolesterase that catalyzes the hydrolysis of S-D-lactoyl-glutathione to form glutathione and D-lactic acid. This chain is Hydroxyacylglutathione hydrolase, mitochondrial (Hagh), found in Mus musculus (Mouse).